A 1181-amino-acid polypeptide reads, in one-letter code: Clustered mitochondria protein homolog (1181 aa).

The interval alanine 165–glutamine 195 is disordered. Over residues valine 176–aspartate 187 the composition is skewed to acidic residues. A Clu domain is found at aspartate 379 to leucine 622. Residues glycine 1130–arginine 1181 form a disordered region. The segment covering lysine 1150–glycine 1159 has biased composition (basic residues). Over residues lysine 1160–leucine 1173 the composition is skewed to basic and acidic residues.

Belongs to the CLU family. In terms of assembly, may associate with the eukaryotic translation initiation factor 3 (eIF-3) complex.

The protein localises to the cytoplasm. Functionally, mRNA-binding protein involved in proper cytoplasmic distribution of mitochondria. In Yarrowia lipolytica (strain CLIB 122 / E 150) (Yeast), this protein is Clustered mitochondria protein homolog.